Here is a 424-residue protein sequence, read N- to C-terminus: Tubulin gamma chain, nucleomorph (424 aa).

137–143 (NGGTGAG) contacts GTP.

It belongs to the tubulin family.

In terms of biological role, tubulin is the major constituent of microtubules. The gamma chain is found at microtubule organizing centers (MTOC) such as the spindle poles or the centrosome, suggesting that it is involved in the minus-end nucleation of microtubule assembly. The sequence is that of Tubulin gamma chain, nucleomorph (tubG) from Guillardia theta (Cryptophyte).